A 197-amino-acid polypeptide reads, in one-letter code: ATP-dependent Clp protease proteolytic subunit (197 aa).

S98 (nucleophile) is an active-site residue. The active site involves H123.

Belongs to the peptidase S14 family. As to quaternary structure, fourteen ClpP subunits assemble into 2 heptameric rings which stack back to back to give a disk-like structure with a central cavity, resembling the structure of eukaryotic proteasomes. Forms large heterooligomeric complexes consisting of an ATPase component (ClpX, ClpC or ClpE) and a proteolytic component (ClpP).

The protein localises to the cytoplasm. It carries out the reaction Hydrolysis of proteins to small peptides in the presence of ATP and magnesium. alpha-casein is the usual test substrate. In the absence of ATP, only oligopeptides shorter than five residues are hydrolyzed (such as succinyl-Leu-Tyr-|-NHMec, and Leu-Tyr-Leu-|-Tyr-Trp, in which cleavage of the -Tyr-|-Leu- and -Tyr-|-Trp bonds also occurs).. Low intrinsic peptidase activity is stimulated by ATP-binding subunits ClpC, ClpE and ClpX. Activity is disregulated by acyldepsipeptides (ADEP) antibiotics, which negate the need for ATP-binding subunits for activation and which makes it into an unregulated protease. Each ClpP subunit binds 1 ADEP molecule, which prevents binding of ClpX. ADEP binding causes conformational shifts that open the gated pore of the ring. Protease activity is inhibited by diisopropylfluoro-phosphate. Protease activity is inhibited by bortezomib, an oncology drug originally designed to work on the human proteasome. Functionally, cleaves peptides in various proteins in a process that requires ATP hydrolysis. Has a limited peptidase activity in the absence of ATP-binding subunits ClpC, ClpE or ClpX. Has a chymotrypsin-like activity. Plays a major role in the degradation of misfolded proteins. ClpXP is involved in the complete degradation of the site-2 clipped anti-sigma-W factor RsiW. This results in the release of SigW and the transcriptional activation of genes under the control of the sigma-W factor. Probably the major protease that degrades proteins tagged by trans-translation. This is ATP-dependent Clp protease proteolytic subunit from Bacillus subtilis (strain 168).